Consider the following 188-residue polypeptide: Ribosome maturation factor RimM (188 aa).

One can recognise a PRC barrel domain in the interval 103–177; it reads EEGWYYADLI…RVVIDPPAGT (75 aa).

Belongs to the RimM family. Binds ribosomal protein uS19.

The protein localises to the cytoplasm. In terms of biological role, an accessory protein needed during the final step in the assembly of 30S ribosomal subunit, possibly for assembly of the head region. Essential for efficient processing of 16S rRNA. May be needed both before and after RbfA during the maturation of 16S rRNA. It has affinity for free ribosomal 30S subunits but not for 70S ribosomes. The polypeptide is Ribosome maturation factor RimM (Parvibaculum lavamentivorans (strain DS-1 / DSM 13023 / NCIMB 13966)).